Reading from the N-terminus, the 366-residue chain is RNA 3'-terminal phosphate cyclase (366 aa).

ATP is bound by residues Gln-104, Pro-131, Tyr-294, Asp-297, Gln-298, and His-320. The Tele-AMP-histidine intermediate role is filled by His-320.

The protein belongs to the RNA 3'-terminal cyclase family. Type 1 subfamily.

The protein resides in the nucleus. The protein localises to the nucleoplasm. The catalysed reaction is a 3'-end 3'-phospho-ribonucleotide-RNA + ATP = a 3'-end 2',3'-cyclophospho-ribonucleotide-RNA + AMP + diphosphate. Functionally, catalyzes the conversion of 3'-phosphate to a 2',3'-cyclic phosphodiester at the end of RNA. The mechanism of action of the enzyme occurs in 3 steps: (A) adenylation of the enzyme by ATP; (B) transfer of adenylate to an RNA-N3'P to produce RNA-N3'PP5'A; (C) and attack of the adjacent 2'-hydroxyl on the 3'-phosphorus in the diester linkage to produce the cyclic end product. Likely functions in some aspects of cellular RNA processing. Function plays an important role in regulating axon regeneration by inhibiting central nervous system (CNS) axon regeneration following optic nerve injury. The polypeptide is RNA 3'-terminal phosphate cyclase (RTCA) (Bos taurus (Bovine)).